A 90-amino-acid chain; its full sequence is Antitoxin epsilon 1 (90 aa).

This sequence belongs to the epsilon antitoxin family. In the presence of the zeta toxin, forms an inactive PezA(2)PezT(2) heterotetramer.

In terms of biological role, antitoxin component of a type II toxin-antitoxin (TA) system. Neutralizes the toxic effect of zeta toxin. Part of a postsegregational killing (PSK) system involved in the killing of plasmid-free cells. Continuous synthesis of the epsilon antitoxin is required to counteract the zeta toxin. The chain is Antitoxin epsilon 1 from Enterococcus faecalis (Streptococcus faecalis).